A 157-amino-acid polypeptide reads, in one-letter code: Transcription elongation factor GreA (157 aa).

Residues 46 to 73 (AEYHSARERQSFIEGRIAELEEIISAAE) adopt a coiled-coil conformation.

This sequence belongs to the GreA/GreB family.

Its function is as follows. Necessary for efficient RNA polymerase transcription elongation past template-encoded arresting sites. The arresting sites in DNA have the property of trapping a certain fraction of elongating RNA polymerases that pass through, resulting in locked ternary complexes. Cleavage of the nascent transcript by cleavage factors such as GreA or GreB allows the resumption of elongation from the new 3'terminus. GreA releases sequences of 2 to 3 nucleotides. In Acidiphilium cryptum (strain JF-5), this protein is Transcription elongation factor GreA.